The sequence spans 343 residues: Nuclease EXOG, mitochondrial (343 aa).

Catalysis depends on histidine 121, which acts as the Proton acceptor. Residue asparagine 152 coordinates a divalent metal cation.

This sequence belongs to the DNA/RNA non-specific endonuclease family. In terms of assembly, homodimer. The cofactor is a divalent metal cation.

The protein resides in the mitochondrion inner membrane. Functionally, endo/exonuclease with nicking activity towards supercoiled DNA, a preference for single-stranded DNA and 5'-3' exonuclease activity. The protein is Nuclease EXOG, mitochondrial (exog) of Danio rerio (Zebrafish).